The chain runs to 293 residues: MSLFRRVGIIARLDKPQILDTVKKLMEYLQEKDIAPVLEDQLATMMPGVKVASSALKELGDHCDMVMVVGGDGSFLGAARAICNYDIPVLGINRGTLGFLTDISPHNLQEELDPIFRGEYHEEKRFMIEAKIKRQNRPSGEGIALNDLVLHPGKSARMIRFDLFIDDQFVMNQKSDGLIVATPTGSTAYALSAGGPIMLPKLDALVLVPMHPHTLSNRPIVIDANARIRIVVCESNLTYPSVSCDGQLNITAAPGDEIHITKKAGGIRLIHPKNHDFYNVCRDKLGWQSSYRP.

Asp72 acts as the Proton acceptor in catalysis. NAD(+) is bound by residues 72–73 (DG), 146–147 (ND), Arg157, Lys174, Asp176, 187–192 (TAYALS), and Gln247.

The protein belongs to the NAD kinase family. A divalent metal cation is required as a cofactor.

The protein localises to the cytoplasm. The enzyme catalyses NAD(+) + ATP = ADP + NADP(+) + H(+). Its function is as follows. Involved in the regulation of the intracellular balance of NAD and NADP, and is a key enzyme in the biosynthesis of NADP. Catalyzes specifically the phosphorylation on 2'-hydroxyl of the adenosine moiety of NAD to yield NADP. This chain is NAD kinase, found in Marinomonas sp. (strain MWYL1).